The sequence spans 807 residues: Glycerol-3-phosphate acyltransferase (807 aa).

The HXXXXD motif motif lies at 308–313; the sequence is CHRSHM.

This sequence belongs to the GPAT/DAPAT family.

The protein localises to the cell inner membrane. The catalysed reaction is sn-glycerol 3-phosphate + an acyl-CoA = a 1-acyl-sn-glycero-3-phosphate + CoA. It participates in phospholipid metabolism; CDP-diacylglycerol biosynthesis; CDP-diacylglycerol from sn-glycerol 3-phosphate: step 1/3. In Shewanella baltica (strain OS223), this protein is Glycerol-3-phosphate acyltransferase.